A 453-amino-acid chain; its full sequence is D-aminoacyl-tRNA deacylase (453 aa).

A disordered region spans residues 428–453 (VRADVALHERPRERVRRPSDDEGKGN).

It belongs to the DtdA deacylase family. In terms of assembly, monomer. Zn(2+) is required as a cofactor.

The enzyme catalyses a D-aminoacyl-tRNA + H2O = a tRNA + a D-alpha-amino acid + H(+). It carries out the reaction glycyl-tRNA(Ala) + H2O = tRNA(Ala) + glycine + H(+). In terms of biological role, D-aminoacyl-tRNA deacylase with broad substrate specificity. By recycling D-aminoacyl-tRNA to D-amino acids and free tRNA molecules, this enzyme counteracts the toxicity associated with the formation of D-aminoacyl-tRNA entities in vivo. The protein is D-aminoacyl-tRNA deacylase of Halobacterium salinarum (strain ATCC 29341 / DSM 671 / R1).